A 366-amino-acid polypeptide reads, in one-letter code: Chorismate synthase (366 aa).

Position 48 (Arg48) interacts with NADP(+). Residues 125–127 (RSS), 241–242 (NA), Gly285, 300–304 (KPTSS), and Arg326 contribute to the FMN site.

The protein belongs to the chorismate synthase family. In terms of assembly, homotetramer. Requires FMNH2 as cofactor.

It carries out the reaction 5-O-(1-carboxyvinyl)-3-phosphoshikimate = chorismate + phosphate. It functions in the pathway metabolic intermediate biosynthesis; chorismate biosynthesis; chorismate from D-erythrose 4-phosphate and phosphoenolpyruvate: step 7/7. Its function is as follows. Catalyzes the anti-1,4-elimination of the C-3 phosphate and the C-6 proR hydrogen from 5-enolpyruvylshikimate-3-phosphate (EPSP) to yield chorismate, which is the branch point compound that serves as the starting substrate for the three terminal pathways of aromatic amino acid biosynthesis. This reaction introduces a second double bond into the aromatic ring system. This chain is Chorismate synthase, found in Roseobacter denitrificans (strain ATCC 33942 / OCh 114) (Erythrobacter sp. (strain OCh 114)).